An 899-amino-acid polypeptide reads, in one-letter code: Ewing's tumor-associated antigen 1 homolog (899 aa).

The disordered stretch occupies residues 1 to 82; sequence MSRRRKHGDS…TEERYETPKR (82 aa). Residues 71-81 are compositionally biased toward basic and acidic residues; that stretch reads SNTEERYETPK. Residues 105-111 carry the ATR-activation domain (AAD) motif; sequence IFWDQNS. Residues 180–210 are a coiled coil; the sequence is TKLKSQNQEEELMKLAKQFDKNMEELDVIQE. Glycyl lysine isopeptide (Lys-Gly) (interchain with G-Cter in SUMO2) cross-links involve residues Lys-416 and Lys-444. Ser-467 is modified (phosphoserine). Residues Lys-485 and Lys-539 each participate in a glycyl lysine isopeptide (Lys-Gly) (interchain with G-Cter in SUMO2) cross-link. The RBM1 motif motif lies at 607–622; sequence DDVDDDILYQACDDIE. Ser-810 is subject to Phosphoserine. Residues 833-899 form a disordered region; that stretch reads NKTVNPLPGK…AQASSVKKGR (67 aa). Over residues 859-877 the composition is skewed to basic and acidic residues; that stretch reads PSKEEEEKNRKCSPEEIQR. An RBM2 motif motif is present at residues 868–890; it reads RKCSPEEIQRKRQAALIRRMAKA.

In terms of assembly, interacts (via RBM1 motif) with RPA1. Interacts (via RBM2 motif) with RPA2. Interacts (via the ATR-activation domain motif) with ATR. Post-translationally, phosphorylated by ATR.

It is found in the nucleus. Its function is as follows. Replication stress response protein that accumulates at DNA damage sites and promotes replication fork progression and integrity. Recruited to stalled replication forks via interaction with the RPA complex and directly stimulates ATR kinase activity independently of TOPBP1. Probably only regulates a subset of ATR targets. The chain is Ewing's tumor-associated antigen 1 homolog from Bos taurus (Bovine).